The sequence spans 189 residues: Interferon alpha-D (189 aa).

Residues 1-23 (MAPAWSLLLALLLLSCNAICSLG) form the signal peptide. Disulfide bonds link Cys-24-Cys-122 and Cys-52-Cys-162.

The protein belongs to the alpha/beta interferon family.

The protein resides in the secreted. Its function is as follows. Produced by macrophages, IFN-alpha have antiviral activities. Interferon stimulates the production of two enzymes: a protein kinase and an oligoadenylate synthetase. This chain is Interferon alpha-D (IFNAD), found in Bos taurus (Bovine).